A 335-amino-acid chain; its full sequence is Biotin synthase (335 aa).

The region spanning 46 to 274 (YKVQLASLFS…KSKIRLSAGR (229 aa)) is the Radical SAM core domain. 3 residues coordinate [4Fe-4S] cluster: Cys-61, Cys-65, and Cys-68. [2Fe-2S] cluster is bound by residues Cys-105, Cys-137, Cys-197, and Arg-269.

The protein belongs to the radical SAM superfamily. Biotin synthase family. In terms of assembly, homodimer. Requires [4Fe-4S] cluster as cofactor. The cofactor is [2Fe-2S] cluster.

The catalysed reaction is (4R,5S)-dethiobiotin + (sulfur carrier)-SH + 2 reduced [2Fe-2S]-[ferredoxin] + 2 S-adenosyl-L-methionine = (sulfur carrier)-H + biotin + 2 5'-deoxyadenosine + 2 L-methionine + 2 oxidized [2Fe-2S]-[ferredoxin]. It functions in the pathway cofactor biosynthesis; biotin biosynthesis; biotin from 7,8-diaminononanoate: step 2/2. Its function is as follows. Catalyzes the conversion of dethiobiotin (DTB) to biotin by the insertion of a sulfur atom into dethiobiotin via a radical-based mechanism. In Prochlorococcus marinus subsp. pastoris (strain CCMP1986 / NIES-2087 / MED4), this protein is Biotin synthase.